The chain runs to 171 residues: Shikimate kinase (171 aa).

Gly14 to Thr19 contacts ATP. Ser18 contacts Mg(2+). Substrate contacts are provided by Asp36, Arg60, and Gly82. Residue Arg120 coordinates ATP. Arg139 lines the substrate pocket. Gln156 provides a ligand contact to ATP.

Belongs to the shikimate kinase family. Monomer. The cofactor is Mg(2+).

The protein resides in the cytoplasm. It catalyses the reaction shikimate + ATP = 3-phosphoshikimate + ADP + H(+). The protein operates within metabolic intermediate biosynthesis; chorismate biosynthesis; chorismate from D-erythrose 4-phosphate and phosphoenolpyruvate: step 5/7. Functionally, catalyzes the specific phosphorylation of the 3-hydroxyl group of shikimic acid using ATP as a cosubstrate. This Shewanella woodyi (strain ATCC 51908 / MS32) protein is Shikimate kinase.